The chain runs to 449 residues: Na(+)-translocating NADH-quinone reductase subunit A (449 aa).

It belongs to the NqrA family. As to quaternary structure, composed of six subunits; NqrA, NqrB, NqrC, NqrD, NqrE and NqrF.

The catalysed reaction is a ubiquinone + n Na(+)(in) + NADH + H(+) = a ubiquinol + n Na(+)(out) + NAD(+). In terms of biological role, NQR complex catalyzes the reduction of ubiquinone-1 to ubiquinol by two successive reactions, coupled with the transport of Na(+) ions from the cytoplasm to the periplasm. NqrA to NqrE are probably involved in the second step, the conversion of ubisemiquinone to ubiquinol. This Serratia proteamaculans (strain 568) protein is Na(+)-translocating NADH-quinone reductase subunit A.